The sequence spans 257 residues: Imidazole glycerol phosphate synthase subunit HisF (257 aa).

Residues D11 and D130 contribute to the active site.

Belongs to the HisA/HisF family. As to quaternary structure, heterodimer of HisH and HisF.

It localises to the cytoplasm. The catalysed reaction is 5-[(5-phospho-1-deoxy-D-ribulos-1-ylimino)methylamino]-1-(5-phospho-beta-D-ribosyl)imidazole-4-carboxamide + L-glutamine = D-erythro-1-(imidazol-4-yl)glycerol 3-phosphate + 5-amino-1-(5-phospho-beta-D-ribosyl)imidazole-4-carboxamide + L-glutamate + H(+). It functions in the pathway amino-acid biosynthesis; L-histidine biosynthesis; L-histidine from 5-phospho-alpha-D-ribose 1-diphosphate: step 5/9. IGPS catalyzes the conversion of PRFAR and glutamine to IGP, AICAR and glutamate. The HisF subunit catalyzes the cyclization activity that produces IGP and AICAR from PRFAR using the ammonia provided by the HisH subunit. This Shewanella piezotolerans (strain WP3 / JCM 13877) protein is Imidazole glycerol phosphate synthase subunit HisF.